The sequence spans 1099 residues: Solute carrier family 12 member 1 (1099 aa).

Residues 1–177 (MSLNNSSNVF…EDDQAGVVKF (177 aa)) are Cytoplasmic-facing. The RFXV motif motif lies at 20 to 23 (RFQV). The segment at 31 to 53 (ESSAAADDNTDPPHYEETSFGDE) is disordered. Residue S61 is modified to Phosphoserine. S91 carries the post-translational modification Phosphoserine; by OXSR1 and STK39. T95 bears the Phosphothreonine mark. Phosphothreonine; by OXSR1 and STK39 is present on residues T100 and T105. T118 is modified (phosphothreonine). Phosphoserine is present on S120. Phosphoserine; by AMPK is present on S130. Phosphoserine is present on S148. A helical transmembrane segment spans residues 178-198 (GWVKGVLVRCMLNIWGVMLFI). The Extracellular segment spans residues 199–201 (RLS). The helical transmembrane segment at 202 to 222 (WIVGEAGIGLGVLIILLSTMV) threads the bilayer. Residues 223 to 259 (TSITGLSTSAIATNGFVRGGGAYYLISRSLGPEFGGS) are Cytoplasmic-facing. A helical membrane pass occupies residues 260–280 (IGLIFAFANAVAVAMYVVGFA). Topologically, residues 281 to 302 (ETVVDLLKESDSMMVDPTNDIR) are extracellular. A helical membrane pass occupies residues 303-323 (IIGSITVVILLGISVAGMEWE). The Cytoplasmic segment spans residues 324–327 (AKAQ). The chain crosses the membrane as a helical span at residues 328–348 (VILLVILLIAIANFFIGTVIP). Topologically, residues 349–379 (SNNEKKSRGFFNYQASIFAENFGPRFTKGEG) are extracellular. A helical membrane pass occupies residues 380–400 (FFSVFAIFFPAATGILAGANI). Residues 401–417 (SGDLEDPQDAIPRGTML) are Cytoplasmic-facing. Residues 418–438 (AIFITTVAYLGVAICVGACVV) form a helical membrane-spanning segment. Residues 439-550 (RDATGNMNDT…NNEPLRGYIL (112 aa)) lie on the Extracellular side of the membrane. N446 and N456 each carry an N-linked (GlcNAc...) asparagine glycan. 2 helical membrane passes run 551 to 571 (TFLI…APII) and 572 to 592 (SNFF…ASYA). Residues 593 to 609 (KSPGWRPAYGIYNMWVS) lie on the Extracellular side of the membrane. Residues 610–630 (LFGAVLCCAVMFVINWWAAVI) traverse the membrane as a helical segment. Residues 631–1099 (TYVIEFFLYV…NHKNVLTFYS (469 aa)) lie on the Cytoplasmic side of the membrane.

The protein belongs to the SLC12A transporter family. As to quaternary structure, when phosphorylated, interacts with PPP3CB. Phosphorylated at Ser-91, Thr-100 and Thr-105 by OXSR1/OSR1 and STK39/SPAK downstream of WNK kinases (WNK1, WNK2, WNK3 or WNK4), promoting its activity. Kidney; localizes to the thick ascending limbs (at protein level).

Its subcellular location is the apical cell membrane. It catalyses the reaction K(+)(out) + 2 chloride(out) + Na(+)(out) = K(+)(in) + 2 chloride(in) + Na(+)(in). With respect to regulation, activated following phosphorylation by OXSR1/OSR1 and STK39/SPAK downstream of WNK kinases (WNK1, WNK2, WNK3 or WNK4). Renal sodium, potassium and chloride ion cotransporter that mediates the transepithelial NaCl reabsorption in the thick ascending limb and plays an essential role in the urinary concentration and volume regulation. Electrically silent transporter system. This Homo sapiens (Human) protein is Solute carrier family 12 member 1 (SLC12A1).